The chain runs to 353 residues: Spermidine/putrescine import ATP-binding protein PotA (353 aa).

The 231-residue stretch at 7-237 (IRFERVTKEY…PINRFVADFI (231 aa)) folds into the ABC transporter domain. 39–46 (GPSGCGKT) serves as a coordination point for ATP.

The protein belongs to the ABC transporter superfamily. Spermidine/putrescine importer (TC 3.A.1.11.1) family. As to quaternary structure, the complex is composed of two ATP-binding proteins (PotA), two transmembrane proteins (PotB and PotC) and a solute-binding protein (PotD).

The protein resides in the cell membrane. It catalyses the reaction ATP + H2O + polyamine-[polyamine-binding protein]Side 1 = ADP + phosphate + polyamineSide 2 + [polyamine-binding protein]Side 1.. Functionally, part of the ABC transporter complex PotABCD involved in spermidine/putrescine import. Responsible for energy coupling to the transport system. In Geobacillus kaustophilus (strain HTA426), this protein is Spermidine/putrescine import ATP-binding protein PotA.